The sequence spans 21 residues: Kassinatuerin-1 (21 aa).

Ile21 carries the isoleucine amide modification.

Expressed by the skin dorsal glands.

Its subcellular location is the secreted. In terms of biological role, shows broad-spectrum antimicrobial activity against the Gram-negative bacterium E.coli (MIC=6.25 uM), K.pneumoniae (MIC=25 uM), E.cloacae (MIC=6.25 uM), P.aeruginosa (MIC=25 uM), the Gram-positive bacterium S.aureus (MIC=6.25 uM), S.epidermidis (MIC=6.25 uM), E.faecalis (MIC=12.5 uM), and the fungus C.albicans (MIC=100 uM). Has no antimicrobial effect against P.mirabilis (MIC&gt;100 uM). Has relatively high cytolytic and hemolytic activities. Its alpha-helix has considerable amphipathic character. The sequence is that of Kassinatuerin-1 from Kassina senegalensis (Senegal running frog).